We begin with the raw amino-acid sequence, 237 residues long: uncharacterized protein (237 aa).

The first 27 residues, 1–27 (MKSFLRKPKFWLLLLGGLSTSSIILSA), serve as a signal peptide directing secretion. The N-palmitoyl cysteine moiety is linked to residue Cys-28. Residue Cys-28 is the site of S-diacylglycerol cysteine attachment.

The protein belongs to the MG307/MG309/MG338 family.

The protein localises to the membrane. This is an uncharacterized protein from Mycoplasma pneumoniae (strain ATCC 29342 / M129 / Subtype 1) (Mycoplasmoides pneumoniae).